The sequence spans 278 residues: Shikimate dehydrogenase (NADP(+)) (278 aa).

Residues 18–20 (SRS) and Thr-65 contribute to the shikimate site. The Proton acceptor role is filled by Lys-69. Residue Glu-80 participates in NADP(+) binding. Residues Asn-89 and Asp-104 each coordinate shikimate. Residues 129–133 (GAGGS) and Leu-218 contribute to the NADP(+) site. Residue Tyr-220 participates in shikimate binding. Position 241 (Gly-241) interacts with NADP(+).

The protein belongs to the shikimate dehydrogenase family. As to quaternary structure, homodimer.

It carries out the reaction shikimate + NADP(+) = 3-dehydroshikimate + NADPH + H(+). The protein operates within metabolic intermediate biosynthesis; chorismate biosynthesis; chorismate from D-erythrose 4-phosphate and phosphoenolpyruvate: step 4/7. Its function is as follows. Involved in the biosynthesis of the chorismate, which leads to the biosynthesis of aromatic amino acids. Catalyzes the reversible NADPH linked reduction of 3-dehydroshikimate (DHSA) to yield shikimate (SA). This chain is Shikimate dehydrogenase (NADP(+)), found in Rhodopseudomonas palustris (strain ATCC BAA-98 / CGA009).